Consider the following 61-residue polypeptide: MAKKSMIAKQKRTPKFKVQAYTRCERCGRPHSVYRKFKLCRICFRELAYKGQIPGVKKASW.

The Zn(2+) site is built by Cys24, Cys27, Cys40, and Cys43.

Belongs to the universal ribosomal protein uS14 family. Zinc-binding uS14 subfamily. In terms of assembly, part of the 30S ribosomal subunit. Contacts proteins S3 and S10. Zn(2+) is required as a cofactor.

Its function is as follows. Binds 16S rRNA, required for the assembly of 30S particles and may also be responsible for determining the conformation of the 16S rRNA at the A site. The sequence is that of Small ribosomal subunit protein uS14 from Anoxybacillus flavithermus (strain DSM 21510 / WK1).